A 302-amino-acid polypeptide reads, in one-letter code: 33 kDa chaperonin (302 aa).

2 disulfides stabilise this stretch: cysteine 247–cysteine 249 and cysteine 280–cysteine 283.

Belongs to the HSP33 family. In terms of processing, under oxidizing conditions two disulfide bonds are formed involving the reactive cysteines. Under reducing conditions zinc is bound to the reactive cysteines and the protein is inactive.

The protein localises to the cytoplasm. Redox regulated molecular chaperone. Protects both thermally unfolding and oxidatively damaged proteins from irreversible aggregation. Plays an important role in the bacterial defense system toward oxidative stress. The protein is 33 kDa chaperonin of Prochlorococcus marinus (strain MIT 9301).